A 690-amino-acid polypeptide reads, in one-letter code: Potassium-transporting ATPase ATP-binding subunit (690 aa).

4 helical membrane-spanning segments follow: residues S49–P69, A72–A92, V229–L249, and A253–I273. The 4-aspartylphosphate intermediate role is filled by D317. ATP contacts are provided by residues D354, E358, F385–S392, and K403. Mg(2+) is bound by residues D526 and D530. The next 3 membrane-spanning stretches (helical) occupy residues F596–M616, A624–L644, and L662–L682.

It belongs to the cation transport ATPase (P-type) (TC 3.A.3) family. Type IA subfamily. In terms of assembly, the system is composed of three essential subunits: KdpA, KdpB and KdpC.

Its subcellular location is the cell inner membrane. The enzyme catalyses K(+)(out) + ATP + H2O = K(+)(in) + ADP + phosphate + H(+). Part of the high-affinity ATP-driven potassium transport (or Kdp) system, which catalyzes the hydrolysis of ATP coupled with the electrogenic transport of potassium into the cytoplasm. This subunit is responsible for energy coupling to the transport system and for the release of the potassium ions to the cytoplasm. The protein is Potassium-transporting ATPase ATP-binding subunit of Pseudomonas aeruginosa (strain ATCC 15692 / DSM 22644 / CIP 104116 / JCM 14847 / LMG 12228 / 1C / PRS 101 / PAO1).